Here is a 398-residue protein sequence, read N- to C-terminus: Immunoglobulin heavy constant gamma 2A (398 aa).

Ig-like domains follow at residues 5 to 97 (PSVY…KKIE), 120 to 219 (PSVF…RTIS), and 228 to 324 (PQVY…KSFS). 3 disulfide bridges follow: Cys26-Cys81, Cys143-Cys203, and Cys249-Cys307. The N-linked (GlcNAc...) asparagine glycan is linked to Asn179. Residues 345–362 (GLWTTITIFISLFLLSVC) form a helical membrane-spanning segment. Residues 363 to 398 (YSASVTLFKVKWIFSSVVELKQTISPDYRNMIGQGA) are Cytoplasmic-facing.

The protein resides in the cell membrane. The sequence is that of Immunoglobulin heavy constant gamma 2A from Mus musculus (Mouse).